Here is a 353-residue protein sequence, read N- to C-terminus: Photosystem II protein D1 (353 aa).

Thr2 bears the N-acetylthreonine mark. Residue Thr2 is modified to Phosphothreonine. Transmembrane regions (helical) follow at residues 29–46, 118–133, and 142–156; these read YIGW…TATS, HFLL…EWEL, and WIAV…AATA. A chlorophyll a-binding site is contributed by His118. Tyr126 is a pheophytin a binding site. Residues Asp170 and Glu189 each contribute to the [CaMn4O5] cluster site. A helical transmembrane segment spans residues 197–218; sequence FHMLGVAGVFGGSLFSAMHGSL. Chlorophyll a is bound at residue His198. A quinone-binding positions include His215 and 264-265; that span reads SF. Fe cation is bound at residue His215. Fe cation is bound at residue His272. The helical transmembrane segment at 274 to 288 threads the bilayer; sequence FLAAWPVVGIWFTAL. 4 residues coordinate [CaMn4O5] cluster: His332, Glu333, Asp342, and Ala344. The propeptide occupies 345-353; the sequence is AVEAPSING.

It belongs to the reaction center PufL/M/PsbA/D family. As to quaternary structure, PSII is composed of 1 copy each of membrane proteins PsbA, PsbB, PsbC, PsbD, PsbE, PsbF, PsbH, PsbI, PsbJ, PsbK, PsbL, PsbM, PsbT, PsbX, PsbY, PsbZ, Psb30/Ycf12, at least 3 peripheral proteins of the oxygen-evolving complex and a large number of cofactors. It forms dimeric complexes. It depends on The D1/D2 heterodimer binds P680, chlorophylls that are the primary electron donor of PSII, and subsequent electron acceptors. It shares a non-heme iron and each subunit binds pheophytin, quinone, additional chlorophylls, carotenoids and lipids. D1 provides most of the ligands for the Mn4-Ca-O5 cluster of the oxygen-evolving complex (OEC). There is also a Cl(-1) ion associated with D1 and D2, which is required for oxygen evolution. The PSII complex binds additional chlorophylls, carotenoids and specific lipids. as a cofactor. Tyr-161 forms a radical intermediate that is referred to as redox-active TyrZ, YZ or Y-Z. Post-translationally, C-terminally processed by CTPA; processing is essential to allow assembly of the oxygen-evolving complex and thus photosynthetic growth.

The protein localises to the plastid. Its subcellular location is the chloroplast thylakoid membrane. It carries out the reaction 2 a plastoquinone + 4 hnu + 2 H2O = 2 a plastoquinol + O2. Its function is as follows. Photosystem II (PSII) is a light-driven water:plastoquinone oxidoreductase that uses light energy to abstract electrons from H(2)O, generating O(2) and a proton gradient subsequently used for ATP formation. It consists of a core antenna complex that captures photons, and an electron transfer chain that converts photonic excitation into a charge separation. The D1/D2 (PsbA/PsbD) reaction center heterodimer binds P680, the primary electron donor of PSII as well as several subsequent electron acceptors. In Lotus japonicus (Lotus corniculatus var. japonicus), this protein is Photosystem II protein D1.